A 276-amino-acid polypeptide reads, in one-letter code: NAD kinase (276 aa).

The active-site Proton acceptor is the Asp-66. NAD(+) contacts are provided by residues 66 to 67 (DG), 139 to 140 (ND), Asp-168, 179 to 184 (TAYNIS), and Gln-234.

This sequence belongs to the NAD kinase family. It depends on a divalent metal cation as a cofactor.

It is found in the cytoplasm. The enzyme catalyses NAD(+) + ATP = ADP + NADP(+) + H(+). Its function is as follows. Involved in the regulation of the intracellular balance of NAD and NADP, and is a key enzyme in the biosynthesis of NADP. Catalyzes specifically the phosphorylation on 2'-hydroxyl of the adenosine moiety of NAD to yield NADP. The polypeptide is NAD kinase (Campylobacter lari (strain RM2100 / D67 / ATCC BAA-1060)).